Here is a 284-residue protein sequence, read N- to C-terminus: Bifunctional protein FolD (284 aa).

166–168 lines the NADP(+) pocket; the sequence is GAS.

It belongs to the tetrahydrofolate dehydrogenase/cyclohydrolase family. As to quaternary structure, homodimer.

The catalysed reaction is (6R)-5,10-methylene-5,6,7,8-tetrahydrofolate + NADP(+) = (6R)-5,10-methenyltetrahydrofolate + NADPH. The enzyme catalyses (6R)-5,10-methenyltetrahydrofolate + H2O = (6R)-10-formyltetrahydrofolate + H(+). Its pathway is one-carbon metabolism; tetrahydrofolate interconversion. Its function is as follows. Catalyzes the oxidation of 5,10-methylenetetrahydrofolate to 5,10-methenyltetrahydrofolate and then the hydrolysis of 5,10-methenyltetrahydrofolate to 10-formyltetrahydrofolate. The sequence is that of Bifunctional protein FolD from Legionella pneumophila (strain Corby).